Reading from the N-terminus, the 131-residue chain is Protein FAM107B (131 aa).

Ala-2 carries the post-translational modification N-acetylalanine. 2 disordered regions span residues 39–78 (MNQKRGLAPQNKPELQKVMEKRKRDQVIKQKEEEAQKKKS) and 100–131 (KLQEEQENAPEFVKVKGNLRRTGQEVAQAQES). N6-acetyllysine is present on Lys-50. Residues 52 to 78 (ELQKVMEKRKRDQVIKQKEEEAQKKKS) are compositionally biased toward basic and acidic residues. Positions 61 to 112 (KRDQVIKQKEEEAQKKKSDLEIELLKRQQKLEQLELEKQKLQEEQENAPEFV) form a coiled coil.

The protein belongs to the FAM107 family.

The sequence is that of Protein FAM107B from Homo sapiens (Human).